We begin with the raw amino-acid sequence, 256 residues long: UPF0259 membrane protein YPO2199/y2042/YP_1997 (256 aa).

The next 6 membrane-spanning stretches (helical) occupy residues 20-40 (IAAI…LNQT), 90-110 (FSAL…IAMV), 118-138 (ALQA…LMFI), 141-161 (LVIQ…AIAL), 192-212 (LIVP…FLIS), and 221-241 (IATI…LVYL).

The protein belongs to the UPF0259 family.

It localises to the cell inner membrane. The polypeptide is UPF0259 membrane protein YPO2199/y2042/YP_1997 (Yersinia pestis).